Here is a 299-residue protein sequence, read N- to C-terminus: Nitrogenase iron protein (299 aa).

Residue 11 to 18 participates in ATP binding; that stretch reads GKGGIGKS. Position 99 (Cys-99) interacts with [4Fe-4S] cluster. Arg-102 is modified (ADP-ribosylarginine; by dinitrogenase reductase ADP-ribosyltransferase). Cys-133 contacts [4Fe-4S] cluster.

This sequence belongs to the NifH/BchL/ChlL family. Homodimer. [4Fe-4S] cluster serves as cofactor. In terms of processing, the reversible ADP-ribosylation of Arg-102 inactivates the nitrogenase reductase and regulates nitrogenase activity.

The enzyme catalyses N2 + 8 reduced [2Fe-2S]-[ferredoxin] + 16 ATP + 16 H2O = H2 + 8 oxidized [2Fe-2S]-[ferredoxin] + 2 NH4(+) + 16 ADP + 16 phosphate + 6 H(+). In terms of biological role, the key enzymatic reactions in nitrogen fixation are catalyzed by the nitrogenase complex, which has 2 components: the iron protein and the molybdenum-iron protein. The protein is Nitrogenase iron protein of Rhodopseudomonas palustris (strain BisB5).